Reading from the N-terminus, the 329-residue chain is Alpha-tubulin N-acetyltransferase 1 (329 aa).

The N-acetyltransferase domain maps to 5–185 (SQVALLPKLS…NNFVVFHRYF (181 aa)). Residues 119–132 (FFVDTSFQRKGFGK) and 155–164 (SVKFLAFLQK) each bind acetyl-CoA. 2 disordered regions span residues 218 to 261 (PKYQ…GVGK) and 306 to 329 (GARRRMSPTRSGVQYNIISGTPEH). The segment covering 220-229 (YQSTTGPNNN) has biased composition (polar residues). Over residues 238–249 (TPPPPPLPPPLV) the composition is skewed to pro residues. Residues 313–329 (PTRSGVQYNIISGTPEH) show a composition bias toward polar residues.

The protein belongs to the acetyltransferase ATAT1 family.

It catalyses the reaction L-lysyl-[alpha-tubulin] + acetyl-CoA = N(6)-acetyl-L-lysyl-[alpha-tubulin] + CoA + H(+). Its function is as follows. Specifically acetylates 'Lys-40' in alpha-tubulin on the lumenal side of microtubules. Promotes microtubule destabilization and accelerates microtubule dynamics; this activity may be independent of acetylation activity. Acetylates alpha-tubulin with a slow enzymatic rate, due to a catalytic site that is not optimized for acetyl transfer. Enters the microtubule through each end and diffuses quickly throughout the lumen of microtubules. Acetylates only long/old microtubules because of its slow acetylation rate since it does not have time to act on dynamically unstable microtubules before the enzyme is released. The polypeptide is Alpha-tubulin N-acetyltransferase 1 (Trypanosoma cruzi (strain CL Brener)).